Consider the following 250-residue polypeptide: Small ribosomal subunit protein uS2 (250 aa).

It belongs to the universal ribosomal protein uS2 family.

The polypeptide is Small ribosomal subunit protein uS2 (Polaromonas sp. (strain JS666 / ATCC BAA-500)).